A 412-amino-acid polypeptide reads, in one-letter code: MSELLLPPEHRYAKIIKEKLNEDGSELSILNLGPTHPATHGIFQNILLMDGERIVDAEPTIGYIHRAFEKIAENRPFYQITPLTDRMNYCSSPINNMAWWMTLEKLLDIEVPKRAQYLRVIVMELARITDHIICNSILGVDTGAYTGFLYVFQFREKIYEIYEEICGARLTTNMGRIGGFERDWSPKAFQLLNTFLEEFPIAWKEFENLFERNRIFIDRTVNVGAISAEKAMAYGFTGPNLRAAGIDYDVRVAEPYSSYEDFEFIIPVGKSGDTYDRFCVRNAEVWESLSIIRQALAKMPEGNVYHAEVPDYYLPPKEDVYHNMESLIYHFKIVMGEVPVPVAEIYHAVEGGNGELGFYLTTDGSRTPYRLHFRRPCFIYYQAYPEMIKGALLSDAIVILSSLNVIAGELDA.

It belongs to the complex I 49 kDa subunit family. In terms of assembly, NDH-1 is composed of 14 different subunits. Subunits NuoB, C, D, E, F, and G constitute the peripheral sector of the complex.

Its subcellular location is the cell inner membrane. It carries out the reaction a quinone + NADH + 5 H(+)(in) = a quinol + NAD(+) + 4 H(+)(out). NDH-1 shuttles electrons from NADH, via FMN and iron-sulfur (Fe-S) centers, to quinones in the respiratory chain. The immediate electron acceptor for the enzyme in this species is believed to be a menaquinone. Couples the redox reaction to proton translocation (for every two electrons transferred, four hydrogen ions are translocated across the cytoplasmic membrane), and thus conserves the redox energy in a proton gradient. The protein is NADH-quinone oxidoreductase subunit D of Flavobacterium psychrophilum (strain ATCC 49511 / DSM 21280 / CIP 103535 / JIP02/86).